Here is a 476-residue protein sequence, read N- to C-terminus: Argininosuccinate lyase (476 aa).

Over residues methionine 1–serine 17 the composition is skewed to low complexity. A disordered region spans residues methionine 1–methionine 22.

This sequence belongs to the lyase 1 family. Argininosuccinate lyase subfamily.

It localises to the cytoplasm. It carries out the reaction 2-(N(omega)-L-arginino)succinate = fumarate + L-arginine. Its pathway is amino-acid biosynthesis; L-arginine biosynthesis; L-arginine from L-ornithine and carbamoyl phosphate: step 3/3. The chain is Argininosuccinate lyase from Jannaschia sp. (strain CCS1).